The following is a 1927-amino-acid chain: Integrin beta-like protein A (1927 aa).

The N-terminal stretch at 1–20 is a signal peptide; that stretch reads MNRILTLFILFISLFIVCEA. The Extracellular segment spans residues 21–1860; sequence THFRFGTMSW…KENNNKTVLT (1840 aa). Asn309 carries N-linked (GlcNAc...) asparagine glycosylation. The EGF-like domain occupies 425–462; that stretch reads YGEKCDPVDPCVNGESNEGSQGNGKCTCYYGWEGKNCD. 2 cysteine pairs are disulfide-bonded: Cys435–Cys450 and Cys452–Cys461. The VWFA domain maps to 522-709; that stretch reads EVLVLVDSQP…VLSKAVVKAI (188 aa). N-linked (GlcNAc...) asparagine glycosylation is found at Asn1122, Asn1516, Asn1717, Asn1723, and Asn1855. The helical transmembrane segment at 1861 to 1881 threads the bilayer; sequence GAIAGAAAGAGLLAAGAWFLL. The Cytoplasmic portion of the chain corresponds to 1882–1927; it reads KKSAPPTDAFFGEGAFADGAVSTNPMYEESGRSAINPLYEASSENL.

It belongs to the SIB family. In terms of assembly, interacts with talA/talin.

It is found in the membrane. Its function is as follows. Implicated in cellular adhesion to substrate or phagocytic particles. This is Integrin beta-like protein A (sibA) from Dictyostelium discoideum (Social amoeba).